The sequence spans 161 residues: Nucleotide-binding protein mma_0840 (161 aa).

The protein belongs to the YajQ family.

Its function is as follows. Nucleotide-binding protein. In Janthinobacterium sp. (strain Marseille) (Minibacterium massiliensis), this protein is Nucleotide-binding protein mma_0840.